We begin with the raw amino-acid sequence, 209 residues long: Translation initiation factor IF-3 (209 aa).

Belongs to the IF-3 family. As to quaternary structure, monomer.

It localises to the cytoplasm. In terms of biological role, IF-3 binds to the 30S ribosomal subunit and shifts the equilibrium between 70S ribosomes and their 50S and 30S subunits in favor of the free subunits, thus enhancing the availability of 30S subunits on which protein synthesis initiation begins. The sequence is that of Translation initiation factor IF-3 from Chlorobium phaeobacteroides (strain DSM 266 / SMG 266 / 2430).